The primary structure comprises 130 residues: U-scoloptoxin(16)-Er4a (130 aa).

The N-terminal stretch at 1 to 26 (MNTVSVVQFLAVGCAVFVLYGRGVFA) is a signal peptide.

This sequence belongs to the scoloptoxin-16 family. In terms of processing, contains 3 disulfide bonds. As to expression, expressed by the venom gland.

It localises to the secreted. This is U-scoloptoxin(16)-Er4a from Ethmostigmus rubripes (Giant centipede).